Here is a 257-residue protein sequence, read N- to C-terminus: Protein YIPF5 (257 aa).

Residues Met-1 to Glu-124 lie on the Cytoplasmic side of the membrane. Positions Pro-75–Lys-106 are interaction with Sec23. The chain crosses the membrane as a helical span at residues Thr-125 to Gly-145. Lys-146 is a topological domain (lumenal). The helical transmembrane segment at Ile-147–Leu-167 threads the bilayer. The Cytoplasmic segment spans residues Asn-168–Thr-173. Residues Gly-174–Leu-194 traverse the membrane as a helical segment. The Lumenal segment spans residues Ser-195–Ser-196. Residues Phe-197 to Gly-217 traverse the membrane as a helical segment. At Trp-218 to Gln-236 the chain is on the cytoplasmic side. Residues Gln-237 to Phe-257 traverse the membrane as a helical segment.

Belongs to the YIP1 family. As to quaternary structure, interacts with the COPII coat components Sec23 (SEC23A and/or SEC23B) and Sec24 (SEC24A and/or SEC24B). Interacts with YIF1A. May interact with RAB1A. Interacts with YIPF3 and YIPF4. As to expression, ubiquitously expressed.

The protein resides in the golgi apparatus. It localises to the cis-Golgi network membrane. The protein localises to the cytoplasmic vesicle. It is found in the COPII-coated vesicle. Its subcellular location is the endoplasmic reticulum membrane. In terms of biological role, plays a role in transport between endoplasmic reticulum and Golgi. In pancreatic beta cells, required to transport proinsulin from endoplasmic reticulum into the Golgi. The chain is Protein YIPF5 from Mus musculus (Mouse).